Here is a 120-residue protein sequence, read N- to C-terminus: Chaperonin GroEL (120 aa).

23-27 (DGTTT) lines the ATP pocket.

Belongs to the chaperonin (HSP60) family. In terms of assembly, forms a cylinder of 14 subunits composed of two heptameric rings stacked back-to-back. Interacts with the co-chaperonin GroES.

The protein localises to the cytoplasm. The enzyme catalyses ATP + H2O + a folded polypeptide = ADP + phosphate + an unfolded polypeptide.. Together with its co-chaperonin GroES, plays an essential role in assisting protein folding. The GroEL-GroES system forms a nano-cage that allows encapsulation of the non-native substrate proteins and provides a physical environment optimized to promote and accelerate protein folding. The polypeptide is Chaperonin GroEL (Mycolicibacterium fallax (Mycobacterium fallax)).